The sequence spans 289 residues: UTP--glucose-1-phosphate uridylyltransferase 2 (289 aa).

It belongs to the UDPGP type 2 family.

The catalysed reaction is alpha-D-glucose 1-phosphate + UTP + H(+) = UDP-alpha-D-glucose + diphosphate. Its pathway is glycolipid metabolism; diglucosyl-diacylglycerol biosynthesis. In terms of biological role, catalyzes the formation of UDP-glucose from glucose-1-phosphate and UTP. This is an intermediate step in the biosynthesis of diglucosyl-diacylglycerol (Glc2-DAG), i.e. a glycolipid found in the membrane, which is also used as a membrane anchor for lipoteichoic acid (LTA). This is UTP--glucose-1-phosphate uridylyltransferase 2 (gtaB2) from Staphylococcus saprophyticus subsp. saprophyticus (strain ATCC 15305 / DSM 20229 / NCIMB 8711 / NCTC 7292 / S-41).